We begin with the raw amino-acid sequence, 796 residues long: MDLLAASVESTLKNLQDKRNFLSEQREHYIDIRSRLVRFINDNDDGEEEGEGQGMVFGDIIISTSKIYLSLGYEYYVEKTKEEAITFVDDKLKLMEDAIEQFNLKIEEAKKTLDNLNHMEDGNGIEEDEANNDEDFLPSMEIREELDDEGNVISSSVTPTTKQPSQSNSKKEQTPAVGPKEKGLAKEKKSKSFEENLKGKLLKRNDEVKKKVQPSKVDTENVYTFADLVQQMDQQDELEDGYIETDEINYDYDAFENSNFKVNDNYEEDDEDEDEEEYLNHSIIPGFEAQSSFLQQIQRLRAQKQSQDHEREEGDVNKSLKPILKKSSFAENSDKKQKKKQVGFASSLEIHEVENLKEENKRQMQSFAVPMYETQESTGIANKMTSDEFDGDLFAKMLGVQEADEVHEKYKEELINQERLEGEASRSNRRTRVSRFRKDRASKKENTLSTFKQETTRSVENEVVEKEPVVGDIIEKEPVVGDVIEKEPVVGDVIEKEPAVTDIVEREPAVNDIVERKPVVGDIIEKEPTINDIVEKEPEINSKSEFETPFKKKKLKSLQKPRSSKSMKKKFDPKILENISDDDYDDDDDGNKKLLSNKSKNNTDEQDKFPSKIQEVSRSMAKTGATVGSEPVRITNVDYHALGGNLDDMVKAYSLGLYDDDLEEDPGTIVEKLEDFKEYNKQVELLRDEIRDFQLENKPVTMEEEENDGNVMNDIIEHEFPESYTNDEDEVALHPGRLQEEVAIEYRRLKEATASKWQSSSPAAHTEGELEPIDKFGNPVKTSRFRSQRLHMDSKP.

Positions lysine 81–aspartate 121 form a coiled coil. Over residues valine 152 to asparagine 168 the composition is skewed to polar residues. 5 disordered regions span residues valine 152 to leucine 197, leucine 300 to phenylalanine 344, glutamate 421 to serine 458, glutamate 535 to glycine 624, and alanine 752 to proline 796. Basic and acidic residues-rich tracts occupy residues serine 169 to leucine 197 and serine 306 to lysine 318. A compositionally biased stretch (basic residues) spans serine 427–alanine 441. Positions glutamate 535–phenylalanine 550 are enriched in basic and acidic residues. The span at lysine 551–lysine 568 shows a compositional bias: basic residues. Positions isoleucine 579–aspartate 589 are enriched in acidic residues. Serine 580 is modified (phosphoserine). Over residues asparagine 601–proline 610 the composition is skewed to basic and acidic residues.

It belongs to the prefoldin subunit alpha family.

The protein localises to the cytoplasm. In terms of biological role, involved in gene expression controlled by TOR kinase and nutrient signaling. May also be involved in positioning the proximal bud pole signal. The protein is Bud site selection protein 27 (BUD27) of Saccharomyces cerevisiae (strain ATCC 204508 / S288c) (Baker's yeast).